Here is a 209-residue protein sequence, read N- to C-terminus: Orotate phosphoribosyltransferase (209 aa).

Residues arginine 96, lysine 100, histidine 102, and glutamate 122–serine 130 each bind 5-phospho-alpha-D-ribose 1-diphosphate. Serine 126 contributes to the orotate binding site.

It belongs to the purine/pyrimidine phosphoribosyltransferase family. PyrE subfamily. In terms of assembly, homodimer. The cofactor is Mg(2+).

It carries out the reaction orotidine 5'-phosphate + diphosphate = orotate + 5-phospho-alpha-D-ribose 1-diphosphate. It functions in the pathway pyrimidine metabolism; UMP biosynthesis via de novo pathway; UMP from orotate: step 1/2. In terms of biological role, catalyzes the transfer of a ribosyl phosphate group from 5-phosphoribose 1-diphosphate to orotate, leading to the formation of orotidine monophosphate (OMP). This Streptococcus pyogenes serotype M12 (strain MGAS2096) protein is Orotate phosphoribosyltransferase.